Consider the following 882-residue polypeptide: Kelch repeat-containing protein 2 (882 aa).

The disordered stretch occupies residues 41-60; that stretch reads TPTLPPNQHRGISGASTALP. 6 Kelch repeats span residues 99-143, 153-207, 213-267, 268-317, 319-369, and 371-417; these read RIFV…PPRV, AYVV…IIAS, KLYL…AYDN, KLWV…VYKH, MCVL…LMKN, and KLLI…LCPG. A Phosphothreonine modification is found at T455. Positions 480-496 are enriched in basic and acidic residues; that stretch reads LDDKAFERKSDREEKKP. The disordered stretch occupies residues 480 to 516; that stretch reads LDDKAFERKSDREEKKPQSSKVDSSINKESPGTGIKV. A compositionally biased stretch (polar residues) spans 498–509; it reads SSKVDSSINKES. Position 509 is a phosphoserine (S509). 2 coiled-coil regions span residues 550–685 and 728–881; these read KNLF…QKIT and NKIE…LEQK.

As to quaternary structure, interacts with KEL1.

This is Kelch repeat-containing protein 2 (KEL2) from Saccharomyces cerevisiae (strain ATCC 204508 / S288c) (Baker's yeast).